The following is a 274-amino-acid chain: Secreted RxLR effector protein 40 (274 aa).

The N-terminal stretch at 1 to 21 is a signal peptide; that stretch reads MRLYTQVVAASLVATLAIVDS. The short motif at 35–53 is the RxLR-dEER element; it reads RFLRQDNATVARVSEDGER. N-linked (GlcNAc...) asparagine glycans are attached at residues Asn-41, Asn-74, and Asn-258.

It belongs to the RxLR effector family.

The protein resides in the secreted. It localises to the host nucleus. It is found in the host cytoplasm. Functionally, secreted effector that completely suppresses the host cell death induced by cell death-inducing proteins. The chain is Secreted RxLR effector protein 40 from Plasmopara viticola (Downy mildew of grapevine).